A 104-amino-acid chain; its full sequence is Replication factor A protein 3 (104 aa).

This sequence belongs to the replication factor A protein 3 family. Component of the heterotrimeric canonical replication protein A complex (RPA).

The protein resides in the nucleus. Functionally, as part of the replication protein A (RPA/RP-A), a single-stranded DNA-binding heterotrimeric complex, may play an essential role in DNA replication, recombination and repair. Binds and stabilizes single-stranded DNA intermediates, preventing complementary DNA reannealing and recruiting different proteins involved in DNA metabolism. The protein is Replication factor A protein 3 (ssb3) of Schizosaccharomyces pombe (strain 972 / ATCC 24843) (Fission yeast).